The sequence spans 154 residues: Protein X (154 aa).

The segment at 68–117 (PCALRFTSARCMETTVNAHQILPKVLHKRTLGLPAMSTTDLEAYFKDCVF) is mitochondrial targeting sequence.

This sequence belongs to the orthohepadnavirus protein X family. As to quaternary structure, may form homodimer. May interact with host CEBPA, CFLAR, CREB1, DDB1, E4F1, HBXIP, HSPD1/HSP60, NFKBIA, POLR2E and SMAD4. Interacts with host SMC5-SMC6 complex and induces its degradation. Interacts with host TRPC4AP; leading to prevent ubiquitination of TRPC4AP. Interacts with host PLSCR1; this interaction promotes ubiquitination and degradation of HBx and impairs HBx-mediated cell proliferation. Post-translationally, a fraction may be phosphorylated in insect cells and HepG2 cells, a human hepatoblastoma cell line. Phosphorylated in vitro by host protein kinase C or mitogen-activated protein kinase. N-acetylated in insect cells.

The protein localises to the host cytoplasm. The protein resides in the host nucleus. It localises to the host mitochondrion. Its function is as follows. Multifunctional protein that plays a role in silencing host antiviral defenses and promoting viral transcription. Does not seem to be essential for HBV infection. May be directly involved in development of cirrhosis and liver cancer (hepatocellular carcinoma). Most of cytosolic activities involve modulation of cytosolic calcium. The effect on apoptosis is controversial depending on the cell types in which the studies have been conducted. May induce apoptosis by localizing in mitochondria and causing loss of mitochondrial membrane potential. May also modulate apoptosis by binding host CFLAR, a key regulator of the death-inducing signaling complex (DISC). Promotes viral transcription by using the host E3 ubiquitin ligase DDB1 to target the SMC5-SMC6 complex to proteasomal degradation. This host complex would otherwise bind to viral episomal DNA, and prevents its transcription. Moderately stimulates transcription of many different viral and cellular transcription elements. Promoters and enhancers stimulated by HBx contain DNA binding sites for NF-kappa-B, AP-1, AP-2, c-EBP, ATF/CREB, or the calcium-activated factor NF-AT. The polypeptide is Protein X (Homo sapiens (Human)).